The following is a 610-amino-acid chain: Elongation factor 4 (610 aa).

One can recognise a tr-type G domain in the interval 15–197 (KSIRNFSIIA…RIINDIPYPK (183 aa)). GTP-binding positions include 27-32 (DHGKST) and 144-147 (NKID).

The protein belongs to the TRAFAC class translation factor GTPase superfamily. Classic translation factor GTPase family. LepA subfamily.

It is found in the cell membrane. It carries out the reaction GTP + H2O = GDP + phosphate + H(+). Required for accurate and efficient protein synthesis under certain stress conditions. May act as a fidelity factor of the translation reaction, by catalyzing a one-codon backward translocation of tRNAs on improperly translocated ribosomes. Back-translocation proceeds from a post-translocation (POST) complex to a pre-translocation (PRE) complex, thus giving elongation factor G a second chance to translocate the tRNAs correctly. Binds to ribosomes in a GTP-dependent manner. The protein is Elongation factor 4 of Buchnera aphidicola subsp. Acyrthosiphon pisum (strain 5A).